Here is a 135-residue protein sequence, read N- to C-terminus: Cofilin-4 (135 aa).

The region spanning 3 to 135 (SCASINDEVI…SQSLVEERCK (133 aa)) is the ADF-H domain.

Belongs to the actin-binding proteins ADF family.

The protein localises to the cytoplasm. The protein resides in the cytoskeleton. Functionally, controls actin polymerization and depolymerization. In Dictyostelium discoideum (Social amoeba), this protein is Cofilin-4 (cofE).